The following is a 1509-amino-acid chain: Putative endo-alpha-N-acetylgalactosaminidase (1509 aa).

Residues 1–41 (MPFRGRRRQSALRGLSLAATFCLAAGSSGISGALFATPAQA) form the signal peptide. 5 residues coordinate Ca(2+): Asp288, Asn290, Asp292, Lys294, and Asp299. The interval 313-585 (GGDDVKNRVV…NLPVKFLQQQ (273 aa)) is catalytic. Asp369 is a substrate binding site. Asp472 acts as the Nucleophile in catalysis. Glu498 acts as the Proton donor/acceptor in catalysis. Residues Asn878, Glu880, Asp926, and Tyr929 each coordinate Ca(2+). Disordered regions lie at residues 1176 to 1197 (NGWG…DGPP) and 1403 to 1439 (IKAA…SGGG). A compositionally biased stretch (low complexity) spans 1407-1428 (NPNPGTGSNPGTGSNPGTDPGT). A compositionally biased stretch (gly residues) spans 1429–1439 (GSAGGNSSGGG). The LPXTG sorting signal signature appears at 1475-1479 (LAETG). Thr1478 carries the post-translational modification Pentaglycyl murein peptidoglycan amidated threonine. The propeptide at 1479–1509 (GFSGLVLPLGIGLMLLLIGAAAIIVRRHRHS) is removed by sortase.

It belongs to the glycosyl hydrolase 101 family. A subfamily.

The protein resides in the secreted. The protein localises to the cell wall. It carries out the reaction a 3-O-[beta-D-galactosyl-(1-&gt;3)-N-acetyl-alpha-D-galactosaminyl]-L-threonyl-[protein] + H2O = beta-D-galactosyl-(1-&gt;3)-N-acetyl-D-galactosamine + L-threonyl-[protein]. The catalysed reaction is a 3-O-[beta-D-galactosyl-(1-&gt;3)-N-acetyl-alpha-D-galactosaminyl]-L-seryl-[protein] + H2O = beta-D-galactosyl-(1-&gt;3)-N-acetyl-D-galactosamine + L-seryl-[protein]. Functionally, probably involved in the breakdown of mucin-type O-linked glycans. Specifically removes the T-antigen disaccharide (Gal-beta-1,3-GalNAc-alpha) from extracellular host glycoproteins. This Renibacterium salmoninarum (strain ATCC 33209 / DSM 20767 / JCM 11484 / NBRC 15589 / NCIMB 2235) protein is Putative endo-alpha-N-acetylgalactosaminidase.